Consider the following 535-residue polypeptide: Alpha-1,3-mannosyl-glycoprotein 4-beta-N-acetylglucosaminyltransferase A (535 aa).

Over 1 to 6 (MRLRNG) the chain is Cytoplasmic. The helical; Signal-anchor for type II membrane protein transmembrane segment at 7–27 (TVATVLVFITTFLSLSWYTAW) threads the bilayer. Positions 28-54 (QNGKEKLIAYQREFHALKERLRIAEHR) form a coiled coil. The Lumenal portion of the chain corresponds to 28-535 (QNGKEKLIAY…NEIHIKKMTN (508 aa)). N-linked (GlcNAc...) asparagine glycans are attached at residues asparagine 77, asparagine 85, and asparagine 458.

This sequence belongs to the glycosyltransferase 54 family. The cofactor is a divalent metal cation. N-glycosylated.

Its subcellular location is the golgi apparatus membrane. It localises to the secreted. The catalysed reaction is N(4)-{beta-D-GlcNAc-(1-&gt;2)-alpha-D-Man-(1-&gt;3)-[beta-D-GlcNAc-(1-&gt;2)-alpha-D-Man-(1-&gt;6)]-beta-D-Man-(1-&gt;4)-beta-D-GlcNAc-(1-&gt;4)-beta-D-GlcNAc}-L-asparaginyl-[protein] + UDP-N-acetyl-alpha-D-glucosamine = N(4)-{beta-D-GlcNAc-(1-&gt;2)-[beta-D-GlcNAc-(1-&gt;4)]-alpha-D-Man-(1-&gt;3)-[beta-D-GlcNAc-(1-&gt;2)-alpha-D-Man-(1-&gt;6)]-beta-D-Man-(1-&gt;4)-beta-D-GlcNAc-(1-&gt;4)-beta-D-GlcNAc}-L-asparaginyl-[protein] + UDP + H(+). It catalyses the reaction an N(4)-{beta-D-GlcNAc-(1-&gt;2)-alpha-D-Man-(1-&gt;3)-[alpha-D-Man-(1-&gt;6)]-beta-D-Man-(1-&gt;4)-beta-D-GlcNAc-(1-&gt;4)-beta-D-GlcNAc}-L-asparaginyl-[protein] + UDP-N-acetyl-alpha-D-glucosamine = an N(4)-{beta-D-GlcNAc-(1-&gt;2)-[beta-D-GlcNAc-(1-&gt;4)]-alpha-D-Man-(1-&gt;3)-[alpha-D-Man-(1-&gt;6)]-beta-D-Man-(1-&gt;4)-beta-D-GlcNAc-(1-&gt;4)-beta-D-GlcNAc}-L-asparaginyl-[protein] + UDP + H(+). The enzyme catalyses an N(4)-{beta-D-GlcNAc-(1-&gt;2)-alpha-D-Man-(1-&gt;3)-[beta-D-GlcNAc-(1-&gt;2)-[beta-D-GlcNAc-(1-&gt;6)]-alpha-D-Man-(1-&gt;6)]-beta-D-Man-(1-&gt;4)-beta-D-GlcNAc-(1-&gt;4)-beta-D-GlcNAc}-L-asparaginyl-[protein] + UDP-N-acetyl-alpha-D-glucosamine = an N(4)-{beta-D-GlcNAc-(1-&gt;2)-[beta-D-GlcNAc-(1-&gt;4)]-alpha-D-Man-(1-&gt;3)-[beta-D-GlcNAc-(1-&gt;2)-[beta-D-GlcNAc-(1-&gt;6)]-alpha-D-Man-(1-&gt;6)]-beta-D-Man-(1-&gt;4)-beta-D-GlcNAc-(1-&gt;4)-beta-D-GlcNAc}-L-asparaginyl-[protein] + UDP + H(+). It carries out the reaction an N(4)-{beta-D-GlcNAc-(1-&gt;2)-alpha-D-Man-(1-&gt;3)-[beta-D-GlcNAc-(1-&gt;2)-alpha-D-Man-(1-&gt;6)]-beta-D-Man-(1-&gt;4)-beta-D-GlcNAc-(1-&gt;4)-[alpha-L-Fuc-(1-&gt;6)]-beta-D-GlcNAc}-L-asparaginyl-[protein] + UDP-N-acetyl-alpha-D-glucosamine = N(4)-{beta-D-GlcNAc-(1-&gt;2)-[beta-D-GlcNAc-(1-&gt;4)]-alpha-D-Man-(1-&gt;3)-[beta-D-GlcNAc-(1-&gt;2)-alpha-D-Man-(1-&gt;6)]-beta-D-Man-(1-&gt;4)-beta-D-GlcNAc-(1-&gt;4)-[alpha-L-Fuc-(1-&gt;6)]-beta-D-GlcNAc}-asparaginyl-[protein] + UDP + H(+). The catalysed reaction is an N(4)-{beta-D-GlcNAc-(1-&gt;2)-alpha-D-Man-(1-&gt;3)-[beta-D-Gal-(1-&gt;4)-beta-D-GlcNAc-(1-&gt;2)-alpha-D-Man-(1-&gt;6)]-beta-D-Man-(1-&gt;4)-beta-D-GlcNAc-(1-&gt;4)-beta-D-GlcNAc}-L-asparaginyl-[protein] + UDP-N-acetyl-alpha-D-glucosamine = an N(4)-{beta-D-GlcNAc-(1-&gt;2)-[beta-D-GlcNAc-(1-&gt;4)]-alpha-D-Man-(1-&gt;3)-[beta-D-Gal-(1-&gt;4)-beta-D-GlcNAc-(1-&gt;2)-alpha-D-Man-(1-&gt;6)]-beta-D-Man-(1-&gt;4)-beta-D-GlcNAc-(1-&gt;4)-beta-D-GlcNAc}-L-asparaginyl-[protein] + UDP + H(+). It catalyses the reaction N(4)-{beta-D-GlcNAc-(1-&gt;2)-alpha-D-Man-(1-&gt;3)-[alpha-D-Man-(1-&gt;3)-{alpha-D-Man-(1-&gt;6)}-alpha-D-Man-(1-&gt;6)]-beta-D-Man-(1-&gt;4)-beta-D-GlcNAc-(1-&gt;4)-beta-D-GlcNAc}-asparaginyl-[protein] + UDP-N-acetyl-alpha-D-glucosamine = N(4)-{beta-D-GlcNAc-(1-&gt;2)-[beta-D-GlcNAc-(1-&gt;4)]-alpha-D-Man-(1-&gt;3)-[alpha-D-Man-(1-&gt;3)-{alpha-D-Man-(1-&gt;6)}-alpha-D-Man-(1-&gt;6)]-beta-D-Man-(1-&gt;4)-beta-D-GlcNAc-(1-&gt;4)-beta-D-GlcNAc}-asparaginyl-[protein] + UDP + H(+). The enzyme catalyses N(4)-{beta-D-GlcNAc-(1-&gt;2)-alpha-D-Man-(1-&gt;3)-beta-D-Man-(1-&gt;4)-beta-D-GlcNAc-(1-&gt;4)-beta-D-GlcNAc}-asparaginyl-[protein] + UDP-N-acetyl-alpha-D-glucosamine = N(4)-{beta-D-GlcNAc-(1-&gt;2)-[beta-D-GlcNAc-(1-&gt;4)]-alpha-D-Man-(1-&gt;3)-beta-D-Man-(1-&gt;4)-beta-D-GlcNAc-(1-&gt;4)-beta-D-GlcNAc}-asparaginyl-[protein] + UDP + H(+). It participates in protein modification; protein glycosylation. With respect to regulation, inhibited by UDP. In terms of biological role, glycosyltransferase that catalyze the transfer of GlcNAc from UDP-GlcNAc to the GlcNAcbeta1-2Manalpha1-3 arm of the core structure of N-linked glycans through a beta1-4 linkage and participates in the production of tri- and tetra-antennary N-linked sugar chains. Involved in glucose transport by mediating SLC2A2/GLUT2 glycosylation, thereby controlling cell-surface expression of SLC2A2 in pancreatic beta cells. This chain is Alpha-1,3-mannosyl-glycoprotein 4-beta-N-acetylglucosaminyltransferase A, found in Gallus gallus (Chicken).